The following is a 263-amino-acid chain: Probable WRKY transcription factor 62 (263 aa).

Residues 59–104 (DHQDDQSNNSSPQDSSPVLESSRKPLHKRGRKTSMAESSDYHRHES) are disordered. Low complexity predominate over residues 64 to 74 (QSNNSSPQDSS). A DNA-binding region (WRKY) is located at residues 104–174 (SSTPIYHDGF…GQHICQLHQA (71 aa)).

It belongs to the WRKY group III family.

It is found in the nucleus. In terms of biological role, transcription factor. Interacts specifically with the W box (5'-(T)TGAC[CT]-3'), a frequently occurring elicitor-responsive cis-acting element. The protein is Probable WRKY transcription factor 62 (WRKY62) of Arabidopsis thaliana (Mouse-ear cress).